Here is a 364-residue protein sequence, read N- to C-terminus: tRNA 2-selenouridine synthase (364 aa).

The region spanning 14 to 137 (LIADTPIIDV…LRQTAIQATI (124 aa)) is the Rhodanese domain. Cysteine 97 serves as the catalytic S-selanylcysteine intermediate.

This sequence belongs to the SelU family. Monomer.

The catalysed reaction is 5-methylaminomethyl-2-thiouridine(34) in tRNA + selenophosphate + (2E)-geranyl diphosphate + H2O + H(+) = 5-methylaminomethyl-2-selenouridine(34) in tRNA + (2E)-thiogeraniol + phosphate + diphosphate. It catalyses the reaction 5-methylaminomethyl-2-thiouridine(34) in tRNA + (2E)-geranyl diphosphate = 5-methylaminomethyl-S-(2E)-geranyl-thiouridine(34) in tRNA + diphosphate. The enzyme catalyses 5-methylaminomethyl-S-(2E)-geranyl-thiouridine(34) in tRNA + selenophosphate + H(+) = 5-methylaminomethyl-2-(Se-phospho)selenouridine(34) in tRNA + (2E)-thiogeraniol. It carries out the reaction 5-methylaminomethyl-2-(Se-phospho)selenouridine(34) in tRNA + H2O = 5-methylaminomethyl-2-selenouridine(34) in tRNA + phosphate. Its function is as follows. Involved in the post-transcriptional modification of the uridine at the wobble position (U34) of tRNA(Lys), tRNA(Glu) and tRNA(Gln). Catalyzes the conversion of 2-thiouridine (S2U-RNA) to 2-selenouridine (Se2U-RNA). Acts in a two-step process involving geranylation of 2-thiouridine (S2U) to S-geranyl-2-thiouridine (geS2U) and subsequent selenation of the latter derivative to 2-selenouridine (Se2U) in the tRNA chain. The polypeptide is tRNA 2-selenouridine synthase (Shigella boydii serotype 18 (strain CDC 3083-94 / BS512)).